The following is a 119-amino-acid chain: Large ribosomal subunit protein bL20 (119 aa).

Belongs to the bacterial ribosomal protein bL20 family.

Functionally, binds directly to 23S ribosomal RNA and is necessary for the in vitro assembly process of the 50S ribosomal subunit. It is not involved in the protein synthesizing functions of that subunit. This is Large ribosomal subunit protein bL20 from Rhodopseudomonas palustris (strain BisB5).